Reading from the N-terminus, the 120-residue chain is UPF0231 protein NT01EI_0766 (120 aa).

Belongs to the UPF0231 family.

The sequence is that of UPF0231 protein NT01EI_0766 from Edwardsiella ictaluri (strain 93-146).